We begin with the raw amino-acid sequence, 97 residues long: Large ribosomal subunit protein uL23 (97 aa).

This sequence belongs to the universal ribosomal protein uL23 family. Part of the 50S ribosomal subunit. Contacts protein L29, and trigger factor when it is bound to the ribosome.

In terms of biological role, one of the early assembly proteins it binds 23S rRNA. One of the proteins that surrounds the polypeptide exit tunnel on the outside of the ribosome. Forms the main docking site for trigger factor binding to the ribosome. In Sinorhizobium medicae (strain WSM419) (Ensifer medicae), this protein is Large ribosomal subunit protein uL23.